A 26-amino-acid chain; its full sequence is RMAGRNRTEFYKLLSRHELDANDFKE.

In terms of processing, phosphorylated by YfhK.

In terms of biological role, probable member of a two-component regulatory system YfhA/YfhK. This is an uncharacterized protein from Klebsiella oxytoca.